The primary structure comprises 589 residues: Protein kinase G11A (589 aa).

A disordered region spans residues 1-167; it reads MASKAMPRAP…SACSSISSVT (167 aa). Polar residues-rich tracts occupy residues 15–36, 46–55, and 63–76; these read NLQS…SPSK, AESSKPNSEV, and TQHQ…TGSN. Residues 91–100 are compositionally biased toward basic and acidic residues; the sequence is RLADEEKGVV. Residues 142-165 are compositionally biased toward low complexity; sequence SSSRCRPSTSSDVSDESACSSISS. Positions 195–533 constitute a Protein kinase domain; the sequence is FKLLKKLGCG…ATEIKQHPFF (339 aa). ATP-binding positions include 201-209 and K224; that span reads LGCGDIGSV. The active-site Proton acceptor is the D320. The disordered stretch occupies residues 551–589; that stretch reads RPVEIERPPKQPVSTSEPAAAPSDAAQKSSDSYLEFDFF.

Belongs to the protein kinase superfamily. Ser/Thr protein kinase family.

It carries out the reaction L-seryl-[protein] + ATP = O-phospho-L-seryl-[protein] + ADP + H(+). The enzyme catalyses L-threonyl-[protein] + ATP = O-phospho-L-threonyl-[protein] + ADP + H(+). Functionally, may play a role in the regulation of metabolism and signal transduction processes. The protein is Protein kinase G11A of Oryza sativa subsp. indica (Rice).